A 277-amino-acid chain; its full sequence is 3-methyl-2-oxobutanoate hydroxymethyltransferase (277 aa).

Mg(2+) contacts are provided by Asp43 and Asp82. 3-methyl-2-oxobutanoate contacts are provided by residues 43 to 44 (DS), Asp82, and Lys112. Glu114 contributes to the Mg(2+) binding site. The active-site Proton acceptor is the Glu181.

Belongs to the PanB family. In terms of assembly, homodecamer; pentamer of dimers. Requires Mg(2+) as cofactor.

Its subcellular location is the cytoplasm. The enzyme catalyses 3-methyl-2-oxobutanoate + (6R)-5,10-methylene-5,6,7,8-tetrahydrofolate + H2O = 2-dehydropantoate + (6S)-5,6,7,8-tetrahydrofolate. The protein operates within cofactor biosynthesis; (R)-pantothenate biosynthesis; (R)-pantoate from 3-methyl-2-oxobutanoate: step 1/2. Functionally, catalyzes the reversible reaction in which hydroxymethyl group from 5,10-methylenetetrahydrofolate is transferred onto alpha-ketoisovalerate to form ketopantoate. The sequence is that of 3-methyl-2-oxobutanoate hydroxymethyltransferase from Bacillus subtilis (strain 168).